The sequence spans 278 residues: MKYIGAHVSASGGVEFAPVNAHEIGANAFALFTKNQRQWVSKPLTEDSIRLFKENCEKFGFAPEYILPHDSYLINLGHPEEEGLTKSRAAFLDEMQRCEQLGLKLLNFHPGSHLNKISVEECLDRIAESINLALEKTKGVTAVIENTAGQGSNLGNEFWQLKYIIDRVEDKSRVGVCLDTCHTFTAGYDFLNDYDDVFGEFGEVVGFEYLRGMHLNDSKKELGSRVDRHDSIGKGLIGFAFFEKLMKDPRFDNMPLILETIDETLWPEEIAWLREQTQ.

Zn(2+)-binding residues include histidine 69, histidine 109, glutamate 145, aspartate 179, histidine 182, histidine 214, aspartate 227, histidine 229, and glutamate 259.

It belongs to the AP endonuclease 2 family. It depends on Zn(2+) as a cofactor.

It carries out the reaction Endonucleolytic cleavage to 5'-phosphooligonucleotide end-products.. In terms of biological role, endonuclease IV plays a role in DNA repair. It cleaves phosphodiester bonds at apurinic or apyrimidinic (AP) sites, generating a 3'-hydroxyl group and a 5'-terminal sugar phosphate. The sequence is that of Probable endonuclease 4 from Bacteroides fragilis (strain ATCC 25285 / DSM 2151 / CCUG 4856 / JCM 11019 / LMG 10263 / NCTC 9343 / Onslow / VPI 2553 / EN-2).